Reading from the N-terminus, the 283-residue chain is Bifunctional protein FolD (283 aa).

NADP(+) contacts are provided by residues 165–167 (GAS) and Ser-190.

The protein belongs to the tetrahydrofolate dehydrogenase/cyclohydrolase family. Homodimer.

The enzyme catalyses (6R)-5,10-methylene-5,6,7,8-tetrahydrofolate + NADP(+) = (6R)-5,10-methenyltetrahydrofolate + NADPH. It catalyses the reaction (6R)-5,10-methenyltetrahydrofolate + H2O = (6R)-10-formyltetrahydrofolate + H(+). It participates in one-carbon metabolism; tetrahydrofolate interconversion. Functionally, catalyzes the oxidation of 5,10-methylenetetrahydrofolate to 5,10-methenyltetrahydrofolate and then the hydrolysis of 5,10-methenyltetrahydrofolate to 10-formyltetrahydrofolate. In Cupriavidus necator (strain ATCC 17699 / DSM 428 / KCTC 22496 / NCIMB 10442 / H16 / Stanier 337) (Ralstonia eutropha), this protein is Bifunctional protein FolD.